The primary structure comprises 927 residues: LPS-assembly protein LptD (927 aa).

The signal sequence occupies residues Met1–Ala22. The disordered stretch occupies residues Leu60–Lys100. A compositionally biased stretch (low complexity) spans Ser70–Glu86.

It belongs to the LptD family. In terms of assembly, component of the lipopolysaccharide transport and assembly complex. Interacts with LptE and LptA.

It is found in the cell outer membrane. Together with LptE, is involved in the assembly of lipopolysaccharide (LPS) at the surface of the outer membrane. The sequence is that of LPS-assembly protein LptD from Pseudomonas syringae pv. tomato (strain ATCC BAA-871 / DC3000).